Here is an 87-residue protein sequence, read N- to C-terminus: uncharacterized protein (87 aa).

This is an uncharacterized protein from Enterobacteria phage T4 (Bacteriophage T4).